Here is a 379-residue protein sequence, read N- to C-terminus: Chaperone protein DnaJ (379 aa).

Residues 5–69 enclose the J domain; sequence EYYERLGVDK…QKRAAYDQYG (65 aa). Residues 141–223 form a CR-type zinc finger; that stretch reads GVEKQVKYNR…CHGSGHEKVA (83 aa). Residues cysteine 154, cysteine 157, cysteine 171, cysteine 174, cysteine 197, cysteine 200, cysteine 211, and cysteine 214 each coordinate Zn(2+). CXXCXGXG motif repeat units lie at residues 154–161, 171–178, 197–204, and 211–218; these read CHTCGGSG, CHKCGGRG, CDVCNGTG, and CETCHGSG.

This sequence belongs to the DnaJ family. As to quaternary structure, homodimer. Zn(2+) serves as cofactor.

The protein localises to the cytoplasm. Its function is as follows. Participates actively in the response to hyperosmotic and heat shock by preventing the aggregation of stress-denatured proteins and by disaggregating proteins, also in an autonomous, DnaK-independent fashion. Unfolded proteins bind initially to DnaJ; upon interaction with the DnaJ-bound protein, DnaK hydrolyzes its bound ATP, resulting in the formation of a stable complex. GrpE releases ADP from DnaK; ATP binding to DnaK triggers the release of the substrate protein, thus completing the reaction cycle. Several rounds of ATP-dependent interactions between DnaJ, DnaK and GrpE are required for fully efficient folding. Also involved, together with DnaK and GrpE, in the DNA replication of plasmids through activation of initiation proteins. The sequence is that of Chaperone protein DnaJ from Lactococcus lactis subsp. lactis (strain IL1403) (Streptococcus lactis).